The chain runs to 497 residues: Guanosine-5'-triphosphate,3'-diphosphate pyrophosphatase (497 aa).

The protein belongs to the GppA/Ppx family. GppA subfamily.

It carries out the reaction guanosine 3'-diphosphate 5'-triphosphate + H2O = guanosine 3',5'-bis(diphosphate) + phosphate + H(+). The protein operates within purine metabolism; ppGpp biosynthesis; ppGpp from GTP: step 2/2. Functionally, catalyzes the conversion of pppGpp to ppGpp. Guanosine pentaphosphate (pppGpp) is a cytoplasmic signaling molecule which together with ppGpp controls the 'stringent response', an adaptive process that allows bacteria to respond to amino acid starvation, resulting in the coordinated regulation of numerous cellular activities. In Vibrio cholerae serotype O1 (strain ATCC 39541 / Classical Ogawa 395 / O395), this protein is Guanosine-5'-triphosphate,3'-diphosphate pyrophosphatase.